Here is a 1143-residue protein sequence, read N- to C-terminus: DNA polymerase III subunit alpha (1143 aa).

It belongs to the DNA polymerase type-C family. DnaE subfamily. DNA polymerase III contains a core (composed of alpha, epsilon and theta chains) that associates with a tau subunit. This core dimerizes to form the PolIII' complex. PolIII' associates with the gamma complex (composed of gamma, delta, delta', psi and chi chains) and with the beta chain to form the complete DNA polymerase III complex.

It is found in the cytoplasm. It catalyses the reaction DNA(n) + a 2'-deoxyribonucleoside 5'-triphosphate = DNA(n+1) + diphosphate. DNA polymerase III is a complex, multichain enzyme responsible for most of the replicative synthesis in bacteria. This DNA polymerase also exhibits 3' to 5' exonuclease activity. The alpha chain is the DNA polymerase. The sequence is that of DNA polymerase III subunit alpha (dnaE1) from Caulobacter vibrioides (strain NA1000 / CB15N) (Caulobacter crescentus).